Here is a 236-residue protein sequence, read N- to C-terminus: 5'-methylthioadenosine/S-adenosylhomocysteine nucleosidase (236 aa).

Catalysis depends on E12, which acts as the Proton acceptor. Substrate-binding positions include G78, I153, and 174 to 175 (ME). The Proton donor role is filled by D198.

The protein belongs to the PNP/UDP phosphorylase family. MtnN subfamily.

The enzyme catalyses S-adenosyl-L-homocysteine + H2O = S-(5-deoxy-D-ribos-5-yl)-L-homocysteine + adenine. It catalyses the reaction S-methyl-5'-thioadenosine + H2O = 5-(methylsulfanyl)-D-ribose + adenine. The catalysed reaction is 5'-deoxyadenosine + H2O = 5-deoxy-D-ribose + adenine. It functions in the pathway amino-acid biosynthesis; L-methionine biosynthesis via salvage pathway; S-methyl-5-thio-alpha-D-ribose 1-phosphate from S-methyl-5'-thioadenosine (hydrolase route): step 1/2. Its function is as follows. Catalyzes the irreversible cleavage of the glycosidic bond in both 5'-methylthioadenosine (MTA) and S-adenosylhomocysteine (SAH/AdoHcy) to adenine and the corresponding thioribose, 5'-methylthioribose and S-ribosylhomocysteine, respectively. Also cleaves 5'-deoxyadenosine, a toxic by-product of radical S-adenosylmethionine (SAM) enzymes, into 5-deoxyribose and adenine. The sequence is that of 5'-methylthioadenosine/S-adenosylhomocysteine nucleosidase from Shewanella sp. (strain MR-7).